We begin with the raw amino-acid sequence, 204 residues long: 3-dehydroquinate dehydratase (204 aa).

3-dehydroquinate contacts are provided by residues Ser-9, 30–32, and Arg-57; that span reads ELR. His-108 acts as the Proton donor/acceptor in catalysis. Catalysis depends on Lys-133, which acts as the Schiff-base intermediate with substrate. Positions 167, 186, and 190 each coordinate 3-dehydroquinate.

It belongs to the type-I 3-dehydroquinase family. Homodimer.

It catalyses the reaction 3-dehydroquinate = 3-dehydroshikimate + H2O. It participates in metabolic intermediate biosynthesis; chorismate biosynthesis; chorismate from D-erythrose 4-phosphate and phosphoenolpyruvate: step 3/7. In terms of biological role, involved in the third step of the chorismate pathway, which leads to the biosynthesis of aromatic amino acids. Catalyzes the cis-dehydration of 3-dehydroquinate (DHQ) and introduces the first double bond of the aromatic ring to yield 3-dehydroshikimate. In Metallosphaera sedula (strain ATCC 51363 / DSM 5348 / JCM 9185 / NBRC 15509 / TH2), this protein is 3-dehydroquinate dehydratase.